We begin with the raw amino-acid sequence, 77 residues long: Lantipeptide prochlorosin 4.3 (77 aa).

A propeptide spanning residues 1–64 (MSEEQLKAFI…DDELEGVAGG (64 aa)) is cleaved from the precursor. 2,3-didehydrobutyrine is present on Thr-65. Residues 67 to 70 (SGGC) constitute a cross-link (lanthionine (Ser-Cys)). The segment at residues 72–76 (TSMFC) is a cross-link (beta-methyllanthionine (Thr-Cys)).

In terms of processing, cross-links are proved in vitro, when coepressed in E.coli with the ProcM lanthionine synthetase. Post-translationally, the lanthionine residue has both a DL configuration (with 2S,6R stereochemistry) and a LL configuration (with 2R,6R stereochemistry). DL and LL diastomers have a 4:1 ratio. It is unknown whether nonenzymatic cyclization occur, but authors favor a model in which ProcM does generate all thioether cross-links. The beta-methyllanthionine residue has a DL configuration (with 2S,3S,6R stereochemistry). Maturation of prochlorosin involves the enzymatic conversion of Thr, and Ser into dehydrated AA and the formation of thioether bonds with cysteines. This is followed by membrane translocation and cleavage of the modified precursor.

It localises to the secreted. Lanthionine-containing peptide (lantipeptide) with unknown function. Does not show antibiotic activity against Lactococcus lactis 117 and Bacillus subtilis 6633 bacteria. Organisms that produce this peptide live in oligotrophic environments at very dilute concentrations, suggesting this peptide is not secreted to influence other bacteria. This is Lantipeptide prochlorosin 4.3 from Prochlorococcus marinus (strain MIT 9313).